An 81-amino-acid polypeptide reads, in one-letter code: Sulfur carrier protein TusA (81 aa).

Cysteine 19 acts as the Cysteine persulfide intermediate in catalysis.

The protein belongs to the sulfur carrier protein TusA family.

It localises to the cytoplasm. In terms of biological role, sulfur carrier protein which probably makes part of a sulfur-relay system. The protein is Sulfur carrier protein TusA of Shewanella baltica (strain OS223).